A 176-amino-acid polypeptide reads, in one-letter code: DNA repair RAD52-like protein 1, mitochondrial (176 aa).

The N-terminal 37 residues, 1 to 37, are a transit peptide targeting the mitochondrion; sequence MAGLGLRLKAAKWTLRSGSGAVSREWSSEMGKGVRRF.

This sequence belongs to the RAD52 family. In terms of assembly, interacts with WHY2. In terms of tissue distribution, expressed in root vascular tissue, tips of primary and secondary roots, young leaves, hydathodes, stomatal guard cells, cauline leaves, flower buds, stipules, carpels, pistils and anther filaments.

It is found in the mitochondrion. It localises to the nucleus. Its function is as follows. Plant-specific single-stranded DNA-binding protein required for efficient heterologous recombination-dependent DNA repair in nuclear and mitochondrial compartments. Forms large nucleo-protein complexes with WHY2 in mitochondria. Binds ssDNA with high affinity, but with little sequence specificity. Involved in double-stranded DNA break repair. Involved in the hydrolytic splicing pathway in mitochondrion. Facilitates the excision of two cis-spliced group II introns, NAD1 intron 2 and NAD2 intron 1. The sequence is that of DNA repair RAD52-like protein 1, mitochondrial from Arabidopsis thaliana (Mouse-ear cress).